A 138-amino-acid chain; its full sequence is Small ribosomal subunit protein uS11c (138 aa).

The protein belongs to the universal ribosomal protein uS11 family. Part of the 30S ribosomal subunit.

Its subcellular location is the plastid. The protein resides in the chloroplast. This Acorus calamus (Sweet flag) protein is Small ribosomal subunit protein uS11c.